We begin with the raw amino-acid sequence, 2481 residues long: Tetratricopeptide repeat protein 28 (2481 aa).

Methionine 1 is modified (N-acetylmethionine). Residues 1–14 (MEQSPPPAPEPTQG) are compositionally biased toward pro residues. Residues 1-48 (MEQSPPPAPEPTQGPTPARSRRRREPESPPASAPIPLFGADTIGQRSP) are disordered. Serine 28 carries the post-translational modification Phosphoserine. 28 TPR repeats span residues 58 to 91 (FVEKVRQSNQACHDGDFHTAIVLYNEALAVDPQN), 93 to 125 (ILYSNRSAAYMKIQQYDKALDDAIKARLLNPKW), 126 to 159 (PKAYFRQGVALQYLGRHADALAAFASGLAQDPKS), 196 to 229 (FVVVSVVGQELLTAGHHGASVVVLEAALKIGTCS), 234 to 267 (GSVFSALSSAYWSLGNTEKSTGYMQQDLDVAKTL), 274 to 307 (CRAHGNLGSAFFSKGNYREALTNHRHQLVLAMKL), 314 to 347 (SSALSSLGHVYTAIGDYPNALASHKQCVLLAKQS), 354 to 387 (ARELGNMGAVYIAMGDFENAVQCHEQHLKIAKDL), 394 to 427 (ARAYSNLGSAYHYRRNFDKAMSYHNYVLELAQEL), 434 to 467 (MRAYAGLGHAARCMQDLERAKQYHEQQLGIAEDL), 474 to 507 (GRASSNLGIIHQMKGDYDTALKLHKTHLCIAQEL), 514 to 547 (GRAYGNMGNAYNALGMYDQAVKYHRQELQISMEV), 554 to 587 (ASTHGNLAVAYQALGAHDRALQHYQNHLNIAREL), 594 to 627 (ARALSNLGNFHCSRGEYVQAAPYYEQYLRLAPDL), 634 to 667 (GKVCHNLGYAHYCLGNYQEAVKYYEQDLALAKDL), 674 to 707 (AKAYCNLGLAFKALLNFSKAEECQKYLLSLAQSL), 714 to 747 (FRALGNLGDIFICKKDINGAIKFYEQQLGLAHQV), 754 to 787 (ASAYAALGTAYRMIQKYDKALGYHTQELEVYQEL), 794 to 827 (CRAHGHLAAVYMALGKYTMAFKCYEEQLDLGQKL), 834 to 867 (AQVYGNMGITKMNMNVMEEAIGYFEQQLAMLQQL), 877 to 910 (GRAYGNLGDCYEALGDYEEAIKYYEQYLSVAQSL), 917 to 950 (AKAYRGLGNGHRAMGSLQQALVCFEKRLVVAHEL), 957 to 990 (AQAYGELGSLHSQLGNYEQAISCLERQLNIARDM), 997 to 1030 (SDAACGLGGVYQQMGEYDTALQYHQLDLQIAEET), 1037 to 1070 (GRAYGNLGLTYESLGTFERAVVYQEQHLSIAAQM), 1077 to 1110 (TVSYSSLGRTHHALQNYSQAVMYLQEGLRLAEQL), 1117 to 1150 (AKIRHGLGLSLWASGNLEEAQHQLYRASALFETI), and 1169 to 1202 (TSSYQALQRVLVSLGHHDEALAVAERGRTRAFAD). Serine 1590 is modified (phosphoserine). Disordered regions lie at residues 2004–2055 (FVSK…DEEE), 2075–2161 (NTCF…DPQE), and 2176–2339 (AVER…PADA). 2 stretches are compositionally biased toward polar residues: residues 2029–2043 (AYLQRSTLPRSQLPP) and 2096–2122 (SVSSKGSISTPNSPVKMTLIPSPNSPF). Residue serine 2104 is modified to Phosphoserine. Low complexity predominate over residues 2130-2146 (SSDTGESDQSSTETDST). Residues 2149 to 2159 (SQEESNPKLDP) are compositionally biased toward basic and acidic residues. Polar residues predominate over residues 2183–2214 (SGGQVSKSNNPEDGVQAPSSTAVFRASETSAF). 2 positions are modified to phosphoserine: serine 2224 and serine 2251. Over residues 2238–2282 (RSSSLPKVSSGYSSPTTSEMSIKDSPSQHSGRPSPGCDSQTSQLD) the composition is skewed to polar residues. Over residues 2307 to 2339 (SPSSGHQSPAGSAPSPALSYSSAGSARSSPADA) the composition is skewed to low complexity. A phosphoserine mark is found at serine 2393 and serine 2398. The interval 2420–2467 (QHDGAPPKAPPNGHWRTETTSLGSLPLPAGPPATAPARPLRLPSGNGY) is disordered.

In terms of assembly, interacts with AURKB. In terms of tissue distribution, widely expressed in fetal tissues. In adult tissues, expressed in testis and ovary and, at much lower levels, in kidney and pancreas.

The protein localises to the cytoplasm. It localises to the cytoskeleton. It is found in the microtubule organizing center. Its subcellular location is the centrosome. The protein resides in the spindle. The protein localises to the spindle pole. It localises to the midbody. During mitosis, may be involved in the condensation of spindle midzone microtubules, leading to the formation of midbody. This is Tetratricopeptide repeat protein 28 (TTC28) from Homo sapiens (Human).